Reading from the N-terminus, the 72-residue chain is uncharacterized protein (72 aa).

It is found in the cytoplasm. Its subcellular location is the nucleus. This is an uncharacterized protein from Saccharomyces cerevisiae (strain ATCC 204508 / S288c) (Baker's yeast).